Here is a 186-residue protein sequence, read N- to C-terminus: Transcription factor FapR (186 aa).

Residues 98–168 (FTKTQIARGH…YVIEVNSYVR (71 aa)) form the MaoC-like domain.

The protein belongs to the FapR family.

Transcriptional factor involved in regulation of membrane lipid biosynthesis by repressing genes involved in fatty acid and phospholipid metabolism. In Staphylococcus haemolyticus (strain JCSC1435), this protein is Transcription factor FapR.